The sequence spans 456 residues: Alcohol acyl transferase 1 allele GSc (456 aa).

Residues histidine 165 and asparagine 386 each act as proton acceptor in the active site.

The protein belongs to the plant acyltransferase family. In terms of tissue distribution, expressed at very low levels in the skin of ripe fruit.

Involved in the biosynthesis of volatile esters which confer ripe apple fruit flavor. Alcohol acyl transferase that can use a wide range of alcohols as substrate to produce esters. The chain is Alcohol acyl transferase 1 allele GSc from Malus domestica (Apple).